A 44-amino-acid chain; its full sequence is Photosystem I reaction center subunit IX (44 aa).

A helical membrane pass occupies residues 7–27 (YLSVAPVLSTLSLGFFAGFLI).

This sequence belongs to the PsaJ family.

It is found in the plastid membrane. Functionally, may help in the organization of the PsaE and PsaF subunits. This chain is Photosystem I reaction center subunit IX, found in Cuscuta obtusiflora (Peruvian dodder).